The following is a 164-amino-acid chain: Cyanate hydratase (164 aa).

Residues Arg90, Glu93, and Ser116 contribute to the active site.

This sequence belongs to the cyanase family.

It carries out the reaction cyanate + hydrogencarbonate + 3 H(+) = NH4(+) + 2 CO2. Its function is as follows. Catalyzes the reaction of cyanate with bicarbonate to produce ammonia and carbon dioxide. This Ricinus communis (Castor bean) protein is Cyanate hydratase.